We begin with the raw amino-acid sequence, 209 residues long: Nascent polypeptide-associated complex subunit alpha (209 aa).

The span at 1–21 (MSNPRVEELPDEEPKKTTVQE) shows a compositional bias: basic and acidic residues. Disordered regions lie at residues 1 to 51 (MSNP…HNRN) and 121 to 175 (QLAS…DKDI). Positions 22 to 36 (HEDDSSDDSEVEEVG) are enriched in acidic residues. Positions 49–114 (NRNEKKARKA…AKIEDVNAAA (66 aa)) constitute an NAC-A/B domain. Over residues 127 to 150 (AEDHSGHNHGEPSKAVEADEKKED) the composition is skewed to basic and acidic residues. A compositionally biased stretch (acidic residues) spans 151–166 (KEDDEDEEEEEEEEVD). The UBA domain maps to 170 to 209 (LEDKDIELVMTQANVSRNKAVKALKENDNDIVNSIMALSI).

It belongs to the NAC-alpha family. In terms of assembly, part of the nascent polypeptide-associated complex (NAC), consisting of EGD2 and EGD1. NAC associates with ribosomes via EGD1.

The protein resides in the cytoplasm. It localises to the nucleus. Functionally, component of the nascent polypeptide-associated complex (NAC), a dynamic component of the ribosomal exit tunnel, protecting the emerging polypeptides from interaction with other cytoplasmic proteins to ensure appropriate nascent protein targeting. The NAC complex also promotes mitochondrial protein import by enhancing productive ribosome interactions with the outer mitochondrial membrane and blocks the inappropriate interaction of ribosomes translating non-secretory nascent polypeptides with translocation sites in the membrane of the endoplasmic reticulum. EGD2 may also be involved in transcription regulation. This Gibberella zeae (strain ATCC MYA-4620 / CBS 123657 / FGSC 9075 / NRRL 31084 / PH-1) (Wheat head blight fungus) protein is Nascent polypeptide-associated complex subunit alpha (EGD2).